The primary structure comprises 186 residues: ATP synthase subunit delta (186 aa).

The protein belongs to the ATPase delta chain family. In terms of assembly, F-type ATPases have 2 components, F(1) - the catalytic core - and F(0) - the membrane proton channel. F(1) has five subunits: alpha(3), beta(3), gamma(1), delta(1), epsilon(1). CF(0) has four main subunits: a(1), b(1), b'(1) and c(10-14). The alpha and beta chains form an alternating ring which encloses part of the gamma chain. F(1) is attached to F(0) by a central stalk formed by the gamma and epsilon chains, while a peripheral stalk is formed by the delta, b and b' chains.

Its subcellular location is the cell inner membrane. Functionally, f(1)F(0) ATP synthase produces ATP from ADP in the presence of a proton or sodium gradient. F-type ATPases consist of two structural domains, F(1) containing the extramembraneous catalytic core and F(0) containing the membrane proton channel, linked together by a central stalk and a peripheral stalk. During catalysis, ATP synthesis in the catalytic domain of F(1) is coupled via a rotary mechanism of the central stalk subunits to proton translocation. In terms of biological role, this protein is part of the stalk that links CF(0) to CF(1). It either transmits conformational changes from CF(0) to CF(1) or is implicated in proton conduction. This chain is ATP synthase subunit delta, found in Bradyrhizobium sp. (strain ORS 278).